The chain runs to 211 residues: uncharacterized protein (211 aa).

2 stretches are compositionally biased toward low complexity: residues 1-19 and 61-74; these read MQDP…SSSD and SPSV…SSNA. Disordered regions lie at residues 1–27 and 54–94; these read MQDP…STGS and ASSR…EPHR.

In terms of assembly, interacts with RLK902. As to expression, expressed in inflorescences, stems, rosette leaves and weakly in roots.

This is an uncharacterized protein from Arabidopsis thaliana (Mouse-ear cress).